A 391-amino-acid polypeptide reads, in one-letter code: Multidrug resistance protein MdtL (391 aa).

Topologically, residues 1 to 3 (MSR) are cytoplasmic. Residues 4–24 (FLICSFALVLLYPAGIDMYLV) form a helical membrane-spanning segment. The Periplasmic segment spans residues 25 to 41 (GLPRIAADLNASEAQLH). The chain crosses the membrane as a helical span at residues 42 to 62 (IAFSVYLAGMAAAMLFAGKVA). Topologically, residues 63–68 (DRSGRK) are cytoplasmic. A helical transmembrane segment spans residues 69 to 89 (PVAIPGAALFIIASVFCSLAE). At 90-92 (TST) the chain is on the periplasmic side. Residues 93–113 (LFLAGRFLQGLGAGCCYVVAF) form a helical membrane-spanning segment. The Cytoplasmic portion of the chain corresponds to 114-130 (AILRDTLDDRRRAKVLS). A helical membrane pass occupies residues 131–151 (LLNGITCIIPVLAPVLGHLIM). The Periplasmic segment spans residues 152–157 (LKFPWQ). Residues 158 to 178 (SLFWTMAIMGIAVLMLSLFIL) form a helical membrane-spanning segment. The Cytoplasmic portion of the chain corresponds to 179–198 (KETRPAAPAASDKSRENSES). Residues 199-221 (LLNRFFLSRVVITTLSVSVILTF) traverse the membrane as a helical segment. Over 222–244 (VNTSPVLLMEIMGFERGEYATIM) the chain is Periplasmic. Residues 245-265 (ALTAGVSMTVSFSTPFALGIF) traverse the membrane as a helical segment. The Cytoplasmic segment spans residues 266–268 (KPR). Residues 269–289 (TLMITSQVLFLAAGITLAVSP) traverse the membrane as a helical segment. Topologically, residues 290-292 (SHA) are periplasmic. The helical transmembrane segment at 293–313 (ISLFGITLICAGFSVGFGVAM) threads the bilayer. The Cytoplasmic segment spans residues 314–330 (SQALGPFSLRAGVASST). Residues 331–351 (LGIAQVCGSSLWIWLAAVVGI) traverse the membrane as a helical segment. Over 352-355 (GAWN) the chain is Periplasmic. Residues 356-376 (MLIGILIACSIVSLLLIMFVA) form a helical membrane-spanning segment. Residues 377-391 (PGRPVAAHEEIHHHA) are Cytoplasmic-facing.

It belongs to the major facilitator superfamily. DHA1 family. MdtL (TC 2.A.1.2.22) subfamily.

The protein localises to the cell inner membrane. The protein is Multidrug resistance protein MdtL of Shigella dysenteriae serotype 1 (strain Sd197).